The primary structure comprises 533 residues: UDP-glucuronosyltransferase 1A1 (533 aa).

The first 25 residues, methionine 1–serine 25, serve as a signal peptide directing secretion. Asparagine 102, asparagine 295, and asparagine 347 each carry an N-linked (GlcNAc...) asparagine glycan. Residues valine 491–phenylalanine 507 form a helical membrane-spanning segment.

It belongs to the UDP-glycosyltransferase family. As to quaternary structure, homodimer. Homooligomer. Interacts with UGT1A3, UGT1A4, UGT1A6, UGT1A7, UGT1A8, UGT1A9 and UGT1A10 to form heterodimers. Isoform 1 interacts with isoform 2/i2 suggesting that oligomerization is involved in negative regulation of transferase activity by isoform 2. Isoform 1 also interacts with respective i2 isoforms of UGT1A3, UGT1A4, UGT1A6, UGT1A7, UGT1A8, UGT1A9 and UGT1A10. As to expression, expressed in liver, colon and small intestine. Not expressed in kidney, esophagus and skin. Expressed in liver, colon, small intestine and kidney. Not expressed in esophagus and skin.

Its subcellular location is the endoplasmic reticulum membrane. It is found in the cytoplasm. The protein resides in the perinuclear region. The enzyme catalyses glucuronate acceptor + UDP-alpha-D-glucuronate = acceptor beta-D-glucuronoside + UDP + H(+). It catalyses the reaction 17beta-estradiol + UDP-alpha-D-glucuronate = 17beta-estradiol 3-O-(beta-D-glucuronate) + UDP + H(+). It carries out the reaction 2-hydroxyestrone + UDP-alpha-D-glucuronate = 2-hydroxyestrone 3-O-(beta-D-glucuronate) + UDP + H(+). The catalysed reaction is 2-hydroxy-17beta-estradiol + UDP-alpha-D-glucuronate = 2-hydroxy-17beta-estradiol 3-O-(beta-D-glucuronate) + UDP + H(+). The enzyme catalyses 2-methoxy-17beta-estradiol + UDP-alpha-D-glucuronate = 2-methoxy-17beta-estradiol 3-O-(beta-D-glucuronate) + UDP + H(+). It catalyses the reaction 17alpha-estradiol + UDP-alpha-D-glucuronate = 17alpha-estradiol 3-O-(beta-D-glucuronate) + UDP + H(+). It carries out the reaction 16beta,17beta-estriol + UDP-alpha-D-glucuronate = 16beta,17beta-estriol 16-O-(beta-D-glucuronate) + UDP + H(+). The catalysed reaction is losartan + UDP-alpha-D-glucuronate = losartan-2-N-beta-D-glucuronide + UDP. The enzyme catalyses prunetin + UDP-alpha-D-glucuronate = prunetin-4'-O-beta-D-glucuronide + UDP. It catalyses the reaction SN-38 + UDP-alpha-D-glucuronate = SN-38 O-beta-D-glucuronide + UDP + H(+). It carries out the reaction (4Z,15Z)-bilirubin IXalpha + UDP-alpha-D-glucuronate = (4Z,15Z)-bilirubin IXalpha C12-beta-D-glucuronoside + UDP. The catalysed reaction is (4Z,15Z)-bilirubin IXalpha + UDP-alpha-D-glucuronate = (4Z,15Z)-bilirubin IXalpha C8-beta-D-glucuronoside + UDP. The enzyme catalyses (4Z,15Z)-bilirubin IXalpha C8-beta-D-glucuronoside + UDP-alpha-D-glucuronate = (4Z,15Z)-bilirubin IXalpha C8,C12-beta-D-bisglucuronoside + UDP. It catalyses the reaction (4Z,15Z)-bilirubin IXalpha C12-beta-D-glucuronoside + UDP-alpha-D-glucuronate = (4Z,15Z)-bilirubin IXalpha C8,C12-beta-D-bisglucuronoside + UDP. It carries out the reaction 8-iso-prostaglandin F2alpha + UDP-alpha-D-glucuronate = 8-iso-prostaglandin F2alpha-glucuronide + UDP + H(+). The catalysed reaction is (5Z,8Z,11Z,14Z)-eicosatetraenoate + UDP-alpha-D-glucuronate = O-[(5Z),(8Z),(11Z),(14Z)-eicosatetraenoyl]-beta-D-glucuronate + UDP. The enzyme catalyses 15-hydroxy-(5Z,8Z,11Z,13E)-eicosatetraenoate + UDP-alpha-D-glucuronate = 15-O-(beta-D-glucuronosyl)-(5Z,8Z,11Z,14Z)-eicosatetraenoate + UDP + H(+). It catalyses the reaction 20-hydroxy-(5Z,8Z,11Z,14Z)-eicosatetraenoate + UDP-alpha-D-glucuronate = 20-O-(beta-D-glucuronosyl)-(5Z,8Z,11Z,14Z)-eicosatetraenoate + UDP + H(+). It carries out the reaction prostaglandin B1 + UDP-alpha-D-glucuronate = 15-O-(beta-D-glucuronosyl)-prostaglandin B1 + UDP + H(+). The catalysed reaction is (E)-ferulate + UDP-alpha-D-glucuronate = (E)-4-O-(beta-D-glucuronosyl)-ferulate + UDP + H(+). The enzyme catalyses (E)-ferulate + UDP-alpha-D-glucuronate = (E)-ferulic acid beta-D-glucuronate ester + UDP. In terms of biological role, UDP-glucuronosyltransferase (UGT) that catalyzes phase II biotransformation reactions in which lipophilic substrates are conjugated with glucuronic acid to increase the metabolite's water solubility, thereby facilitating excretion into either the urine or bile. Essential for the elimination and detoxification of drugs, xenobiotics and endogenous compounds. Catalyzes the glucuronidation of endogenous estrogen hormones such as estradiol, estrone and estriol. Involved in the glucuronidation of bilirubin, a degradation product occurring in the normal catabolic pathway that breaks down heme in vertebrates. Involved in the glucuronidation of arachidonic acid (AA) and AA-derived eicosanoids including 15-HETE, 20-HETE, PGB1 and F2-isoprostane (8-iso-PGF2alpha). Involved in the glucuronidation of the phytochemical ferulic acid at the phenolic or the carboxylic acid group. Also catalyzes the glucuronidation the isoflavones genistein, daidzein, glycitein, formononetin, biochanin A and prunetin, which are phytoestrogens with anticancer and cardiovascular properties. Involved in the glucuronidation of the AGTR1 angiotensin receptor antagonist losartan, a drug which can inhibit the effect of angiotensin II. Involved in the biotransformation of 7-ethyl-10-hydroxycamptothecin (SN-38), the pharmacologically active metabolite of the anticancer drug irinotecan. Lacks UGT glucuronidation activity but acts as a negative regulator of isoform 1. The polypeptide is UDP-glucuronosyltransferase 1A1 (Homo sapiens (Human)).